Reading from the N-terminus, the 576-residue chain is uncharacterized protein (576 aa).

2 stretches are compositionally biased toward polar residues: residues 1–21 (MSTNPNAGIQPLTNSISQSAS) and 28–40 (HTTSHESVSTYQL). A disordered region spans residues 1 to 40 (MSTNPNAGIQPLTNSISQSASAHPELYHTTSHESVSTYQL). A run of 12 helical transmembrane segments spans residues 149–169 (FASSVFSVPAEAITTIFHISL), 173–193 (LLTMTVFLCGYIAGPIVWAPL), 200–220 (KLPLLIGMFGFGIFNISVAVA), 231–251 (FFSGFFASAPLTVVAAAFADM), 261–281 (ITIFAALVFDGPLVSPIIGGF), 291–311 (WTEYITSFMGFFALVIVYLFC), 366–386 (PIVFLITLYSSFVYAILYLLL), 401–421 (MGVAELPYIGLLVGVFIGSAI), 446–466 (LPPMMIGCFMFPAGIFWLSWS), 472–492 (VHWIVPTLSGLATGCGILLIF), 503–525 (YLFRAASAVAANTIMRSAMAAGF), and 542–562 (GSLLGFIAVALIPMPFAFFFF).

Belongs to the major facilitator superfamily. CAR1 family.

It is found in the endoplasmic reticulum. Its subcellular location is the golgi apparatus. It localises to the membrane. This is an uncharacterized protein from Schizosaccharomyces pombe (strain 972 / ATCC 24843) (Fission yeast).